The sequence spans 665 residues: Filensin (665 aa).

The tract at residues 1-40 is head; that stretch reads MYRRSYVFQTRKEQYEHADEASRAAEPERPADEGWAGATS. S5 carries the post-translational modification Phosphoserine. The IF rod domain maps to 40 to 320; that stretch reads SLAALQGLGE…RIIEIEGNRL (281 aa). The tract at residues 41-75 is coil 1A; sequence LAALQGLGERVAAHVQRARALEQRHAGLRRQLDAF. A42 is modified (N-acetylalanine). The interval 76-84 is linker 1; sequence QRLGELAGP. Residues 85 to 184 form a coil 1B region; sequence EDALARQVES…RHKKNLLEVQ (100 aa). The linker 12 stretch occupies residues 185 to 201; sequence TYISILQQIIHTTPPAS. Residues 202–320 form a coil 2 region; it reads IVTSGMREEK…RIIEIEGNRL (119 aa). The segment at 321 to 665 is tail; the sequence is TSAFIETPIP…DKKKSGEKSS (345 aa). Phosphoserine occurs at positions 341 and 420. Disordered regions lie at residues 410 to 439 and 506 to 614; these read SKFESESKEVSPLTQEGAPEDVPDGGQISK and YDGQ…KGPP. G434 carries the N-myristoyl glycine lipid modification. At S513 the chain carries Phosphoserine. Basic and acidic residues predominate over residues 556–571; it reads PEEKREGEERDEESRR. S665 is subject to Phosphoserine.

This sequence belongs to the intermediate filament family. As to quaternary structure, part of a complex required for lens intermediate filament formation composed of BFSP1, BFSP2 and CRYAA. Identified in a complex that contains VIM, EZR, AHNAK, BFSP1, BFSP2, ANK2, PLEC, PRX and spectrin. Found in a complex composed of PPL (via C-terminal linker domain), BFSP1 and BFSP2 in the retinal lens. Within the complex interacts with BFSP2. Interacts (via C-terminus) with MIP (via C-terminus) in aged lens fiber cells. In terms of processing, proteolytically cleaved during lens cell fiber differentiation with increased fragmentation as fiber cell age increases. Myristoylated at Gly-434 following proteolytic cleavage at Asp-433. Post-translationally, acetylated at Ala-42 following proteolytic cleavage at Leu-41. In terms of tissue distribution, expressed in the cortex and nucleus of the retina lens (at protein level).

It localises to the cell membrane. The protein resides in the cytoplasm. Its subcellular location is the cytoskeleton. The protein localises to the cell cortex. Functionally, required for the correct formation of lens intermediate filaments as part of a complex composed of BFSP1, BFSP2 and CRYAA. Involved in altering the calcium regulation of MIP water permeability. The polypeptide is Filensin (BFSP1) (Homo sapiens (Human)).